The chain runs to 464 residues: Soluble pyridine nucleotide transhydrogenase (464 aa).

35-44 (DSRRVVGGNC) is an FAD binding site.

Belongs to the class-I pyridine nucleotide-disulfide oxidoreductase family. FAD is required as a cofactor.

The protein localises to the cytoplasm. The catalysed reaction is NAD(+) + NADPH = NADH + NADP(+). Conversion of NADPH, generated by peripheral catabolic pathways, to NADH, which can enter the respiratory chain for energy generation. In Pseudomonas paraeruginosa (strain DSM 24068 / PA7) (Pseudomonas aeruginosa (strain PA7)), this protein is Soluble pyridine nucleotide transhydrogenase.